Reading from the N-terminus, the 414-residue chain is MQTFLKGKRVGYWLSEKKIKKLNFQAFAELCRKRGMEVVQLNLSRPIEEQGPLDVIIHKLTDVILEADQNDSQSLELVHRFQEYIDAHPETIVLDPLPAIRTLLDRSKSYELIRKIEAYMEDDRICSPPFMELTSLCGDDTMRLLEKNGLTFPFICKTRVAHGTNSHEMAIVFNQEGLNAIQPPCVVQNFINHNAVLYKVFVVGESYTVVQRPSLKNFSAGTSDRESIFFNSHNVSKPESSSVLTELDKIEGVFERPSDEVIRELSRALRQALGVSLFGIDIIINNQTGQHAVIDINAFPGYEGVSEFFTDLLNHIATVLQGQSTAMAATGDVALLRHSKLLAEPAGGLVGERTCSASPGCCGSMMGQDAPWKAEADAGGTAKLPHQRLGCNAGVSPSFQQHCVASLATKASSQ.

K18 is a 1D-myo-inositol 1,3,4-trisphosphate binding site. 2 residues coordinate ATP: R106 and K157. The ATP-grasp domain maps to 117–325 (EAYMEDDRIC…IATVLQGQST (209 aa)). 1D-myo-inositol 1,3,4-trisphosphate contacts are provided by H167 and K199. Residues 188–199 (QNFINHNAVLYK), S214, S232, and S236 contribute to the ATP site. The Mg(2+) site is built by D281, D295, and N297. Residue N297 participates in 1D-myo-inositol 1,3,4-trisphosphate binding. K340 and K383 each carry N6-acetyllysine; by EP300 and CREBBP. S396 bears the Phosphoserine mark. K410 is modified (N6-acetyllysine; by EP300 and CREBBP).

It belongs to the ITPK1 family. In terms of assembly, monomer. Interacts with GPS1/COPS1. Requires Mg(2+) as cofactor. In terms of processing, acetylation by EP300 and CREBBP destabilizes ITPK1, and down-regulates enzymatic activity. Deacetylated by SIRT1. Expressed in brain &gt; heart &gt; skeletal muscle = kidney = pancreas = liver = placenta &gt; lung. In brain, it is expressed in cerebellum, cerebral cortex, medulla, spinal cord, occipital lobe, frontal lobe, temporal lobe and putamen.

It carries out the reaction 1D-myo-inositol 3,4,5,6-tetrakisphosphate + ATP = 1D-myo-inositol 1,3,4,5,6-pentakisphosphate + ADP + H(+). It catalyses the reaction 1D-myo-inositol 1,3,4-trisphosphate + ATP = 1D-myo-inositol 1,3,4,5-tetrakisphosphate + ADP + H(+). The catalysed reaction is 1D-myo-inositol 1,3,4-trisphosphate + ATP = 1D-myo-inositol 1,3,4,6-tetrakisphosphate + ADP + H(+). The enzyme catalyses 1D-myo-inositol 3,4,6-trisphosphate + ATP = 1D-myo-inositol 1,3,4,6-tetrakisphosphate + ADP + H(+). It carries out the reaction 1D-myo-inositol 1,3,4-trisphosphate + 1D-myo-inositol 1,3,4,5,6-pentakisphosphate = 1D-myo-inositol 3,4,5,6-tetrakisphosphate + 1D-myo-inositol 1,3,4,6-tetrakisphosphate. It catalyses the reaction 1D-myo-inositol 1,3,4-trisphosphate + 1D-myo-inositol 1,3,4,5,6-pentakisphosphate = 1D-myo-inositol 3,4,5,6-tetrakisphosphate + 1D-myo-inositol 1,3,4,5-tetrakisphosphate. Kinase that can phosphorylate various inositol polyphosphate such as Ins(3,4,5,6)P4 or Ins(1,3,4)P3. Phosphorylates Ins(3,4,5,6)P4 at position 1 to form Ins(1,3,4,5,6)P5. This reaction is thought to have regulatory importance, since Ins(3,4,5,6)P4 is an inhibitor of plasma membrane Ca(2+)-activated Cl(-) channels, while Ins(1,3,4,5,6)P5 is not. Also phosphorylates Ins(1,3,4)P3 on O-5 and O-6 to form Ins(1,3,4,6)P4, an essential molecule in the hexakisphosphate (InsP6) pathway. Also acts as an inositol polyphosphate phosphatase that dephosphorylates Ins(1,3,4,5)P4 and Ins(1,3,4,6)P4 to Ins(1,3,4)P3, and Ins(1,3,4,5,6)P5 to Ins(3,4,5,6)P4. May also act as an isomerase that interconverts the inositol tetrakisphosphate isomers Ins(1,3,4,5)P4 and Ins(1,3,4,6)P4 in the presence of ADP and magnesium. Probably acts as the rate-limiting enzyme of the InsP6 pathway. Modifies TNF-alpha-induced apoptosis by interfering with the activation of TNFRSF1A-associated death domain. Plays an important role in MLKL-mediated necroptosis. Produces highly phosphorylated inositol phosphates such as inositolhexakisphosphate (InsP6) which bind to MLKL mediating the release of an N-terminal auto-inhibitory region leading to its activation. Essential for activated phospho-MLKL to oligomerize and localize to the cell membrane during necroptosis. This Homo sapiens (Human) protein is Inositol-tetrakisphosphate 1-kinase.